The sequence spans 124 residues: Large ribosomal subunit protein bL12 (124 aa).

The protein belongs to the bacterial ribosomal protein bL12 family. As to quaternary structure, homodimer. Part of the ribosomal stalk of the 50S ribosomal subunit. Forms a multimeric L10(L12)X complex, where L10 forms an elongated spine to which 2 to 4 L12 dimers bind in a sequential fashion. Binds GTP-bound translation factors.

Forms part of the ribosomal stalk which helps the ribosome interact with GTP-bound translation factors. Is thus essential for accurate translation. In Sulfurovum sp. (strain NBC37-1), this protein is Large ribosomal subunit protein bL12.